Reading from the N-terminus, the 437-residue chain is Selenocysteine lyase (437 aa).

Met-1 carries the post-translational modification N-acetylmethionine. Positions 1–30 (MEAAGARNRDARSRAEKSPPESRKVYMDYN) are disordered. Positions 7–26 (RNRDARSRAEKSPPESRKVY) are enriched in basic and acidic residues. Residue Lys-252 is modified to N6-(pyridoxal phosphate)lysine. Cys-380 (S-selanylcysteine intermediate) is an active-site residue.

Belongs to the class-V pyridoxal-phosphate-dependent aminotransferase family. As to quaternary structure, homodimer. Requires pyridoxal 5'-phosphate as cofactor.

The protein localises to the cytoplasm. It localises to the cytosol. The enzyme catalyses L-selenocysteine + AH2 = hydrogenselenide + L-alanine + A + H(+). In terms of biological role, catalyzes the decomposition of L-selenocysteine to L-alanine and elemental selenium. The polypeptide is Selenocysteine lyase (SCLY) (Bos taurus (Bovine)).